Reading from the N-terminus, the 287-residue chain is U-megalopygitoxin(8)-Mo12 (287 aa).

A signal peptide spans M1 to G17. H284 is modified (histidine amide).

It belongs to the megalysin family. In terms of processing, contains 2 disulfide bonds. As to expression, expressed by the venom apparatus.

It is found in the secreted. It localises to the target cell membrane. Functionally, may function as a large pore-forming protein. The sequence is that of U-megalopygitoxin(8)-Mo12 from Megalopyge opercularis (Southern flannel moth).